The primary structure comprises 440 residues: MKIFFISLGCDKNLVDSEVMLGLIRDRGFELTNDESEADIIVVNTCCFIHDAKEESINTILEMAEYKKSGSLKGLIVTGCLAQRYKEDILAEIPEVDALLGTTSYDAITEVIDKVLGGERTESFKDVDYLSEVKTNRVNTTGGYYSFLKIAEGCDKHCTYCIIPKIRGDYRSVPMERLVEEAKFLSEGGVKELILIAQETTVYGVDLYGKKMLPELLRKLCAIDGIEWIRIQYCYPEEINDELIDVLKSETKICHYLDIPIQHASDDILKRMGRRTNNEELVTLITKLRKEIPDIALRTSLITGFPGETEEDHEILKEFVRKMRFERLGVFTYSKEEDTPAAKMKDQITKKVKVARQKELMEIQQGIAFERAESMVGRKLKVMIEGKLVEDGIFIGRTYMDAPNIDGYIFVHTKDELMSGEFVEVTVTEAKEYDLIGTAE.

Residues 1 to 117 (MKIFFISLGC…ITEVIDKVLG (117 aa)) form the MTTase N-terminal domain. 6 residues coordinate [4Fe-4S] cluster: Cys10, Cys46, Cys80, Cys154, Cys158, and Cys161. A Radical SAM core domain is found at 140 to 370 (TTGGYYSFLK…MEIQQGIAFE (231 aa)). The TRAM domain maps to 373–440 (ESMVGRKLKV…KEYDLIGTAE (68 aa)).

It belongs to the methylthiotransferase family. RimO subfamily. [4Fe-4S] cluster serves as cofactor.

The protein resides in the cytoplasm. It carries out the reaction L-aspartate(89)-[ribosomal protein uS12]-hydrogen + (sulfur carrier)-SH + AH2 + 2 S-adenosyl-L-methionine = 3-methylsulfanyl-L-aspartate(89)-[ribosomal protein uS12]-hydrogen + (sulfur carrier)-H + 5'-deoxyadenosine + L-methionine + A + S-adenosyl-L-homocysteine + 2 H(+). Its function is as follows. Catalyzes the methylthiolation of an aspartic acid residue of ribosomal protein uS12. This Lachnoclostridium phytofermentans (strain ATCC 700394 / DSM 18823 / ISDg) (Clostridium phytofermentans) protein is Ribosomal protein uS12 methylthiotransferase RimO.